Consider the following 529-residue polypeptide: All-trans-zeta-carotene desaturase (529 aa).

12–45 (IVVGAGPGGLSAAINLAGQGFRVTVVEKDAVPGG) serves as a coordination point for FAD.

It belongs to the carotenoid/retinoid oxidoreductase family. Requires FAD as cofactor.

The enzyme catalyses all-trans-zeta-carotene + 2 A = all-trans-lycopene + 2 AH2. It functions in the pathway carotenoid biosynthesis; lycopene biosynthesis. Its function is as follows. Dehydrogenates carotenes in the trans conformation: converts all-trans-zeta-carotene into all-trans-lycopene, one of the last dehydrogenation steps of lycopene biosynthesis. This chain is All-trans-zeta-carotene desaturase (carC), found in Myxococcus xanthus.